We begin with the raw amino-acid sequence, 77 residues long: Large ribosomal subunit protein uL29 (77 aa).

It belongs to the universal ribosomal protein uL29 family.

This is Large ribosomal subunit protein uL29 from Gluconobacter oxydans (strain 621H) (Gluconobacter suboxydans).